The sequence spans 778 residues: Serine/threonine-protein kinase BRSK1 (778 aa).

Positions 1-12 (MSSGSKEGGGGS) are enriched in gly residues. The disordered stretch occupies residues 1 to 29 (MSSGSKEGGGGSPAYHLPHPHPHPPQHAQ). Positions 34–285 (YRLEKTLGKG…LEQIQKHPWY (252 aa)) constitute a Protein kinase domain. ATP-binding positions include 40–48 (LGKGQTGLV) and Lys-63. Asp-156 functions as the Proton acceptor in the catalytic mechanism. At Thr-189 the chain carries Phosphothreonine; by LKB1. Ser-193 is subject to Phosphoserine. Residues 314-356 (ELDPDVLESMASLGCFRDRERLHRELRSEEENQEKMIYYLLLD) form the UBA domain. Residues 362–383 (PSCEDQDLPPRNDVDPPRKRVD) show a composition bias toward basic and acidic residues. The interval 362-548 (PSCEDQDLPP…SPGGGVGGAA (187 aa)) is disordered. Phosphoserine is present on residues Ser-399, Ser-443, Ser-447, and Ser-450. Over residues 430 to 457 (SRSVSGASTGLSSSPLSSPRSPVFSFSP) the composition is skewed to low complexity. Residues Arg-466, Arg-481, Arg-484, and Arg-498 each carry the omega-N-methylarginine modification. Positions 491 to 508 (QPPPPSARSTPLPGPPGS) are enriched in pro residues. A Phosphoserine modification is found at Ser-508. Positions 509–533 (PRSSGGTPLHSPLHTPRASPTGTPG) are enriched in low complexity. Position 525 is an omega-N-methylarginine (Arg-525). Thr-529 and Thr-535 each carry phosphothreonine. The residue at position 550 (Arg-550) is an Omega-N-methylarginine. Phosphothreonine is present on Thr-583. Residues Ser-586, Ser-587, and Ser-601 each carry the phosphoserine modification. Residues 719–778 (QPSVQALADEKNGAQTRPAGTPPRSLQPPPGRPDPDLSSSPRRGPSKDKKLLATNGTPLP) form a disordered region.

Belongs to the protein kinase superfamily. CAMK Ser/Thr protein kinase family. SNF1 subfamily. Requires Mg(2+) as cofactor. Phosphorylated at Thr-189 by STK11/LKB1 in complex with STE20-related adapter-alpha (STRADA) pseudo kinase and CAB39. Not phosphorylated at Thr-189 by CaMKK2. In contrast, it is phosphorylated and activated by CaMKK1. May be inactivated via dephosphorylation of Thr-189 by PP2C. May be autophosphorylated. Mainly present in brain. Present in presynaptic nerve terminals (at protein level).

Its subcellular location is the cytoplasm. It localises to the nucleus. It is found in the cytoskeleton. The protein resides in the microtubule organizing center. The protein localises to the centrosome. Its subcellular location is the synapse. It localises to the presynaptic active zone. It is found in the cytoplasmic vesicle. The protein resides in the secretory vesicle. The protein localises to the synaptic vesicle. It catalyses the reaction L-seryl-[protein] + ATP = O-phospho-L-seryl-[protein] + ADP + H(+). It carries out the reaction L-threonyl-[protein] + ATP = O-phospho-L-threonyl-[protein] + ADP + H(+). The catalysed reaction is L-seryl-[tau protein] + ATP = O-phospho-L-seryl-[tau protein] + ADP + H(+). The enzyme catalyses L-threonyl-[tau protein] + ATP = O-phospho-L-threonyl-[tau protein] + ADP + H(+). With respect to regulation, activated by phosphorylation on Thr-189 by STK11/LKB1. Its function is as follows. Serine/threonine-protein kinase that plays a key role in polarization of neurons and centrosome duplication. Phosphorylates CDC25B, CDC25C, MAPT/TAU, RIMS1, TUBG1, TUBG2 and WEE1. Following phosphorylation and activation by STK11/LKB1, acts as a key regulator of polarization of cortical neurons, probably by mediating phosphorylation of microtubule-associated proteins such as MAPT/TAU at 'Thr-523' and 'Ser-573'. Also regulates neuron polarization by mediating phosphorylation of WEE1 at 'Ser-642' in postmitotic neurons, leading to down-regulate WEE1 activity in polarized neurons. Also acts as a positive regulator of centrosome duplication by mediating phosphorylation of gamma-tubulin (TUBG1 and TUBG2) at 'Ser-131', leading to translocation of gamma-tubulin and its associated proteins to the centrosome. Involved in the UV-induced DNA damage checkpoint response, probably by inhibiting CDK1 activity through phosphorylation and activation of WEE1, and inhibition of CDC25B and CDC25C. In neurons, localizes to synaptic vesicles and plays a role in neurotransmitter release, possibly by phosphorylating RIMS1. This Rattus norvegicus (Rat) protein is Serine/threonine-protein kinase BRSK1 (Brsk1).